Here is a 504-residue protein sequence, read N- to C-terminus: Catalase (504 aa).

Catalysis depends on residues histidine 56 and asparagine 129. Tyrosine 339 is a binding site for heme.

The protein belongs to the catalase family. Homodimer. It depends on heme as a cofactor.

It carries out the reaction 2 H2O2 = O2 + 2 H2O. In terms of biological role, decomposes hydrogen peroxide into water and oxygen; serves to protect cells from the toxic effects of hydrogen peroxide. The chain is Catalase (katA) from Staphylococcus epidermidis.